Consider the following 222-residue polypeptide: Protein GrpE (222 aa).

Belongs to the GrpE family. Homodimer.

The protein localises to the cytoplasm. Participates actively in the response to hyperosmotic and heat shock by preventing the aggregation of stress-denatured proteins, in association with DnaK and GrpE. It is the nucleotide exchange factor for DnaK and may function as a thermosensor. Unfolded proteins bind initially to DnaJ; upon interaction with the DnaJ-bound protein, DnaK hydrolyzes its bound ATP, resulting in the formation of a stable complex. GrpE releases ADP from DnaK; ATP binding to DnaK triggers the release of the substrate protein, thus completing the reaction cycle. Several rounds of ATP-dependent interactions between DnaJ, DnaK and GrpE are required for fully efficient folding. This Bartonella bacilliformis (strain ATCC 35685 / KC583 / Herrer 020/F12,63) protein is Protein GrpE.